An 86-amino-acid chain; its full sequence is Large ribosomal subunit protein uL23 (86 aa).

Belongs to the universal ribosomal protein uL23 family. As to quaternary structure, part of the 50S ribosomal subunit. Contacts protein L29.

Functionally, binds to 23S rRNA. One of the proteins that surrounds the polypeptide exit tunnel on the outside of the ribosome. The polypeptide is Large ribosomal subunit protein uL23 (Methanococcus maripaludis (strain C7 / ATCC BAA-1331)).